We begin with the raw amino-acid sequence, 386 residues long: Adiponectin receptor protein 2 (386 aa).

The segment at 1 to 72 (MNEPAKHRLG…ECHDDNSQED (72 aa)) is disordered. At 1 to 147 (MNEPAKHRLG…SIFRIHTETG (147 aa)) the chain is on the cytoplasmic side. Over residues 15–31 (PEPDIRLRKGHQLDDTR) the composition is skewed to basic and acidic residues. Residues 58 to 72 (SPEEPECHDDNSQED) show a composition bias toward acidic residues. The helical transmembrane segment at 148–168 (NIWTHLLGCVFFLCLGIFYMF) threads the bilayer. Topologically, residues 169–181 (RPNISFVAPLQEK) are extracellular. A helical transmembrane segment spans residues 182–202 (VVFGLFFLGAILCLSFSWLFH). H202 contacts Zn(2+). Topologically, residues 203–213 (TVYCHSEGVSR) are cytoplasmic. Residues 214–234 (LFSKLDYSGIALLIMGSFVPW) form a helical membrane-spanning segment. The Extracellular portion of the chain corresponds to 235–245 (LYYSFYCNPQP). Residues 246 to 266 (CFIYLIVICVLGIAAIIVSQW) traverse the membrane as a helical segment. Over 267-273 (DMFATPQ) the chain is Cytoplasmic. Residues 274 to 294 (YRGVRAGVFVGLGLSGIIPTL) traverse the membrane as a helical segment. The Extracellular segment spans residues 295-309 (HYVISEGFLKAATIG). A helical membrane pass occupies residues 310-330 (QIGWLMLMASLYITGAALYAA). Residues 331 to 348 (RIPERFFPGKCDIWFHSH) are Cytoplasmic-facing. H348 and H352 together coordinate Zn(2+). The helical transmembrane segment at 349-369 (QLFHIFVVAGAFVHFHGVSNL) threads the bilayer. At 370-386 (QEFRFMIGGGCTEEDAL) the chain is on the extracellular side.

It belongs to the ADIPOR family. As to quaternary structure, may form homooligomers and heterooligomers with ADIPOR1. Interacts with APPL2 (via BAR domain); ADIPOQ dissociates this interaction. Detected in liver and quadriceps muscle (at protein level). Highly expressed in liver. Highly expressed in white adipose tissue, and at intermediate levels in brown adipose tissue. Expressed at intermediate level in heart, kidney, lung and skeletal muscle. Weakly expressed in brain, spleen and testis.

The protein localises to the cell membrane. In terms of biological role, receptor for ADIPOQ, an essential hormone secreted by adipocytes that regulates glucose and lipid metabolism. Required for normal body fat and glucose homeostasis. ADIPOQ-binding activates a signaling cascade that leads to increased PPARA activity, and ultimately to increased fatty acid oxidation and glucose uptake. Has intermediate affinity for globular and full-length adiponectin. Required for normal revascularization after chronic ischemia caused by severing of blood vessels. This is Adiponectin receptor protein 2 from Mus musculus (Mouse).